The primary structure comprises 378 residues: Spermatogenic leucine zipper protein 1 (378 aa).

The interval 1 to 31 is disordered; sequence MSDTDNSAEMPARCPSPNPAPGAKQEPPNSG. Ser-106 bears the Phosphoserine mark. Positions 116-122 are interaction with PPP1CC isoform gamma-2; that stretch reads KNKIRFK. The helix-loop-helix motif stretch occupies residues 116–127; sequence KNKIRFKDDLFI. The segment at 128-193 is basic motif; it reads HFDPEREQNT…HLRGEYRKLR (66 aa). Residues 182–233 adopt a coiled-coil conformation; that stretch reads SLHLRGEYRKLRNNMEQLLQEADHWSKQHNELSELMRSYQECQNETQETTDK. Ser-207 carries the phosphoserine modification. The leucine-zipper stretch occupies residues 252–273; that stretch reads LEEQVKKLSHDTHALHLIAALL.

As to quaternary structure, interacts with PPP1CC isoform gamma-2. This interaction can prevent SPZ1 binding to the E-box and inhibits PPP1CC activity. Post-translationally, phosphorylated by MAPK1/ERK2 and MAPK3/ERK1. As to expression, expressed specifically in the testis and epidydimis. In the testis expressed in both germ cells and somatic cells (Sertoli and Leydig cells). Expressed in several tumor cell lines.

Its subcellular location is the cytoplasm. It localises to the nucleus. Its function is as follows. Transcription factor that binds to the DNA sequence 5'-CANNTG-3'(E box) and the G-box motif. Directly binds to a guanine-rich region of the PCNA promoter and up-regulates its expression which in turn induces cell transformation and tumor formation. May play an important role in the regulation of cell proliferation and differentiation during spermatogenesis. The sequence is that of Spermatogenic leucine zipper protein 1 (Spz1) from Mus musculus (Mouse).